The sequence spans 414 residues: Arrestin domain-containing protein 3 (414 aa).

Short sequence motifs (PPxY motif) lie at residues 346–349 (PPSY) and 391–394 (PPLY). The interval 393 to 414 (LYSEIDPNPDQSADDRPSCPSR) is disordered. Residues 405–414 (ADDRPSCPSR) are compositionally biased toward basic and acidic residues.

The protein belongs to the arrestin family. Interacts (via PPxY motifs) with NEDD4 (via WW domains). Interacts with ADRB2. Interacts with ADRB3. Interacts with HGS (via PPxY motifs). Does not bind TXN (thioredoxin). Interacts with ITCH.

It localises to the cytoplasm. It is found in the cell membrane. The protein localises to the lysosome. Its subcellular location is the endosome. The protein resides in the early endosome. Its function is as follows. Adapter protein that plays a role in regulating cell-surface expression of adrenergic receptors and probably also other G protein-coupled receptors. Plays a role in NEDD4-mediated ubiquitination and endocytosis af activated ADRB2 and subsequent ADRB2 degradation. May recruit NEDD4 to ADRB2. Alternatively, may function as adapter protein that does not play a major role in recruiting NEDD4 to ADRB2, but rather plays a role in a targeting ADRB2 to endosomes. The sequence is that of Arrestin domain-containing protein 3 (ARRDC3) from Pongo abelii (Sumatran orangutan).